Reading from the N-terminus, the 120-residue chain is ATP-dependent Clp protease adapter protein ClpS (120 aa).

This sequence belongs to the ClpS family. As to quaternary structure, binds to the N-terminal domain of the chaperone ClpA.

In terms of biological role, involved in the modulation of the specificity of the ClpAP-mediated ATP-dependent protein degradation. The protein is ATP-dependent Clp protease adapter protein ClpS of Pseudomonas syringae pv. syringae (strain B728a).